A 99-amino-acid polypeptide reads, in one-letter code: DNA-binding protein HU (99 aa).

The protein belongs to the bacterial histone-like protein family. As to quaternary structure, homodimer.

In terms of biological role, histone-like DNA-binding protein which is capable of wrapping DNA to stabilize it, and thus to prevent its denaturation under extreme environmental conditions. The protein is DNA-binding protein HU (hup) of Rickettsia typhi (strain ATCC VR-144 / Wilmington).